The chain runs to 635 residues: Iron transport multicopper oxidase FET3 (635 aa).

The signal sequence occupies residues 1 to 17 (MMVPLLLSTYFITAVYG). The Extracellular portion of the chain corresponds to 18 to 559 (ATHTFHWTTG…KSIPTGFTKK (542 aa)). 2 Plastocyanin-like domains span residues 42–140 (ITCN…FVIE) and 190–292 (NLIL…LQLN). 2 N-linked (GlcNAc...) asparagine glycosylation sites follow: Asn-70 and Asn-73. Residues His-77 and His-79 each coordinate Cu cation. Residue Asn-109 is glycosylated (N-linked (GlcNAc...) asparagine). Residues His-122 and His-124 each contribute to the Cu cation site. 6 N-linked (GlcNAc...) asparagine glycosylation sites follow: Asn-194, Asn-198, Asn-244, Asn-265, Asn-292, and Asn-359. Residues 382-501 (NPFIYGTNTN…QGLAVVMVED (120 aa)) form the Plastocyanin-like 3 domain. The Cu cation site is built by His-413, His-416, and His-418. An N-linked (GlcNAc...) asparagine glycan is attached at Asn-443. Cu cation contacts are provided by His-483, Cys-484, His-485, and His-489. N-linked (GlcNAc...) asparagine glycosylation is present at Asn-535. A helical transmembrane segment spans residues 560–580 (GIIAMTFSCLAGVLGITMIAI). The Cytoplasmic portion of the chain corresponds to 581 to 628 (YGFSEIPEPEIKVMRNLHLNPEDVLEKTSSSSVISASNSSSLEDSRNQ).

It belongs to the multicopper oxidase family. Cu cation serves as cofactor.

It localises to the cell membrane. Its function is as follows. Iron transport multicopper ferroxidase required for Fe(2+) high affinity uptake. Required to oxidize Fe(2+) and release it from the transporter. Essential component of copper-dependent iron transport. This chain is Iron transport multicopper oxidase FET3 (FET3), found in Candida glabrata (strain ATCC 2001 / BCRC 20586 / JCM 3761 / NBRC 0622 / NRRL Y-65 / CBS 138) (Yeast).